A 228-amino-acid polypeptide reads, in one-letter code: Thermonuclease (228 aa).

Positions 1-23 (MTEYLLSAGICMAIVSILLIGMA) are cleaved as a signal peptide. Residues 24-60 (ISNVSKGQYAKRFFFFATSCLVLTLVVVSSLSSSANA) constitute a propeptide that is removed on maturation. Residue Asp-100 participates in Ca(2+) binding. Arg-114 is a catalytic residue. 2 residues coordinate Ca(2+): Asp-119 and Thr-120. Active-site residues include Glu-122 and Arg-166.

Belongs to the thermonuclease family. Ca(2+) is required as a cofactor.

The protein resides in the secreted. It carries out the reaction Endonucleolytic cleavage to nucleoside 3'-phosphates and 3'-phosphooligonucleotide end-products.. Functionally, enzyme that catalyzes the hydrolysis of both DNA and RNA at the 5' position of the phosphodiester bond. This is Thermonuclease (nuc) from Staphylococcus aureus (strain MSSA476).